A 116-amino-acid polypeptide reads, in one-letter code: Spexin (116 aa).

Positions 1-26 are cleaved as a signal peptide; the sequence is MKGFKSLVVMTLTLFLVFSFMGNCNS. Residues 27-35 constitute a propeptide that is removed on maturation; that stretch reads APQRLFERR. At Gln49 the chain carries Glutamine amide. 2 consecutive propeptides follow at residues 50 to 116 and 74 to 116; these read GRRF…LLNW and PNSQ…LLNW. Over residues 53–73 the composition is skewed to basic and acidic residues; it reads FLSDQSRRKDLSDRPPLERRS. Residues 53 to 80 form a disordered region; that stretch reads FLSDQSRRKDLSDRPPLERRSPNSQQLT.

Belongs to the spexin family.

The protein localises to the secreted. It localises to the extracellular space. It is found in the cytoplasmic vesicle. The protein resides in the secretory vesicle. In terms of biological role, plays a role as a central modulator of cardiovascular and renal function and nociception. Also plays a role in energy metabolism and storage. Inhibits adrenocortical cell proliferation with minor stimulation on corticosteroid release. Functionally, acts as a ligand for galanin receptors GALR2 and GALR3. Intracerebroventricular administration of the peptide induces an increase in arterial blood pressure, a decrease in both heart rate and renal excretion and delayed natriuresis. Intraventricular administration of the peptide induces antinociceptive activity. Also induces contraction of muscarinic-like stomach smooth muscles. Intraperitoneal administration of the peptide induces a reduction in food consumption and body weight. Inhibits long chain fatty acid uptake into adipocytes. Intracerebroventricular administration of the peptide induces a decrease in heart rate, but no change in arterial pressure, and an increase in urine flow rate. Intraventricular administration of the peptide induces antinociceptive activity. This chain is Spexin (SPX), found in Bos taurus (Bovine).